The chain runs to 142 residues: Nucleoside diphosphate kinase (142 aa).

The ATP site is built by Lys-11, Phe-59, Arg-87, Thr-93, Arg-104, and Asn-114. His-117 functions as the Pros-phosphohistidine intermediate in the catalytic mechanism.

The protein belongs to the NDK family. Homotetramer. Mg(2+) is required as a cofactor.

The protein resides in the cytoplasm. The catalysed reaction is a 2'-deoxyribonucleoside 5'-diphosphate + ATP = a 2'-deoxyribonucleoside 5'-triphosphate + ADP. It catalyses the reaction a ribonucleoside 5'-diphosphate + ATP = a ribonucleoside 5'-triphosphate + ADP. Its function is as follows. Major role in the synthesis of nucleoside triphosphates other than ATP. The ATP gamma phosphate is transferred to the NDP beta phosphate via a ping-pong mechanism, using a phosphorylated active-site intermediate. The sequence is that of Nucleoside diphosphate kinase from Yersinia pestis bv. Antiqua (strain Antiqua).